The following is a 184-amino-acid chain: MSATVRILGIDPGSRVTGFGIIDVRGRDHFYVASGCIKTPADEPLFTADRIAVIVRHIGEVVAVYKPQQAAVEQVFVNVNPASTLMLGQARGAALAALVSHKLPVSFTEYTALQVKQAVVGKGKAAKEQVQHMVVQMLGLSGTPQADAADGLAVALTHALRNHGLAAFTKLNPSGMQVKRGRFQ.

Residues Asp11, Glu73, and Asp147 contribute to the active site. Mg(2+)-binding residues include Asp11, Glu73, and Asp147.

The protein belongs to the RuvC family. Homodimer which binds Holliday junction (HJ) DNA. The HJ becomes 2-fold symmetrical on binding to RuvC with unstacked arms; it has a different conformation from HJ DNA in complex with RuvA. In the full resolvosome a probable DNA-RuvA(4)-RuvB(12)-RuvC(2) complex forms which resolves the HJ. Mg(2+) is required as a cofactor.

It localises to the cytoplasm. It carries out the reaction Endonucleolytic cleavage at a junction such as a reciprocal single-stranded crossover between two homologous DNA duplexes (Holliday junction).. Functionally, the RuvA-RuvB-RuvC complex processes Holliday junction (HJ) DNA during genetic recombination and DNA repair. Endonuclease that resolves HJ intermediates. Cleaves cruciform DNA by making single-stranded nicks across the HJ at symmetrical positions within the homologous arms, yielding a 5'-phosphate and a 3'-hydroxyl group; requires a central core of homology in the junction. The consensus cleavage sequence is 5'-(A/T)TT(C/G)-3'. Cleavage occurs on the 3'-side of the TT dinucleotide at the point of strand exchange. HJ branch migration catalyzed by RuvA-RuvB allows RuvC to scan DNA until it finds its consensus sequence, where it cleaves and resolves the cruciform DNA. The sequence is that of Crossover junction endodeoxyribonuclease RuvC from Neisseria gonorrhoeae (strain ATCC 700825 / FA 1090).